The sequence spans 137 residues: ATP synthase epsilon chain, chloroplastic (137 aa).

The protein belongs to the ATPase epsilon chain family. In terms of assembly, F-type ATPases have 2 components, CF(1) - the catalytic core - and CF(0) - the membrane proton channel. CF(1) has five subunits: alpha(3), beta(3), gamma(1), delta(1), epsilon(1). CF(0) has three main subunits: a, b and c.

It is found in the plastid. The protein resides in the chloroplast thylakoid membrane. In terms of biological role, produces ATP from ADP in the presence of a proton gradient across the membrane. This Pinus thunbergii (Japanese black pine) protein is ATP synthase epsilon chain, chloroplastic.